Reading from the N-terminus, the 558-residue chain is Chaperonin GroEL 1 (558 aa).

ATP is bound by residues 29 to 32 (TLGP), 86 to 90 (DGTTT), G413, and D494.

The protein belongs to the chaperonin (HSP60) family. As to quaternary structure, forms a cylinder of 14 subunits composed of two heptameric rings stacked back-to-back. Interacts with the co-chaperonin GroES.

The protein resides in the cytoplasm. The enzyme catalyses ATP + H2O + a folded polypeptide = ADP + phosphate + an unfolded polypeptide.. In terms of biological role, together with its co-chaperonin GroES, plays an essential role in assisting protein folding. The GroEL-GroES system forms a nano-cage that allows encapsulation of the non-native substrate proteins and provides a physical environment optimized to promote and accelerate protein folding. The sequence is that of Chaperonin GroEL 1 from Acaryochloris marina (strain MBIC 11017).